Reading from the N-terminus, the 592-residue chain is Alanine aminotransferase, mitochondrial (592 aa).

The N-terminal 64 residues, 1 to 64 (MLSLSAKNHF…RKVRPVLQRH (64 aa)), are a transit peptide targeting the mitochondrion. Phosphoserine is present on S77. Positions 258, 259, 284, 340, and 409 each coordinate pyridoxal 5'-phosphate. K412 bears the N6-(pyridoxal phosphate)lysine mark. Residue R421 coordinates pyridoxal 5'-phosphate.

Belongs to the class-I pyridoxal-phosphate-dependent aminotransferase family. Alanine aminotransferase subfamily. As to quaternary structure, homodimer. Requires pyridoxal 5'-phosphate as cofactor.

Its subcellular location is the mitochondrion matrix. The catalysed reaction is L-alanine + 2-oxoglutarate = pyruvate + L-glutamate. Its pathway is amino-acid degradation; L-alanine degradation via transaminase pathway; pyruvate from L-alanine: step 1/1. Functionally, alanine aminotransferase involved in both alanine biosynthesis and utilization. Under respiratory conditions, constitutes the sole pathway for alanine biosynthesis and catabolism. Under fermentative conditions, it plays a catabolic role and alanine is mainly synthesized through an alternative pathway. The chain is Alanine aminotransferase, mitochondrial (ALT1) from Saccharomyces cerevisiae (strain ATCC 204508 / S288c) (Baker's yeast).